An 837-amino-acid chain; its full sequence is CoA-transferase/lyase DddD (837 aa).

The active-site Nucleophile is the Asp602.

Belongs to the CoA-transferase III family.

Functionally, dimethyl sulfide (DMS)-producing enzyme. Acts both as a transferase and a lyase: uses acetyl-coenzyme A (acetyl-coA) and dimethylsulfoniopropionate (DMSP) as substrates to produce DMS, acetate and 3-hydroxypropionate-CoA (3HP-CoA). Mediates the CoA-transferase prior to lyase activity. DMS is the principal form by which sulfur is transported from oceans to the atmosphere and is a key component of the ocean sulfur cycle. This is CoA-transferase/lyase DddD from Marinomonas sp. (strain MWYL1).